A 480-amino-acid polypeptide reads, in one-letter code: Iroquois-class homeodomain protein IRX-1 (480 aa).

Residues 127–189 constitute a DNA-binding region (homeobox; TALE-type); sequence DPGRPKNATR…NARRRLKKEN (63 aa). Disordered regions lie at residues 190–285, 318–354, and 401–480; these read KVTW…LGLV, SLAE…PLQH, and PHGP…LPSA. Positions 210–232 are enriched in acidic residues; it reads TEGDPEKAEDDEEIDLESIDIDQ. A Phosphoserine modification is found at S241. Over residues 254 to 263 the composition is skewed to low complexity; it reads ARVAPPASAR. Polar residues predominate over residues 264 to 280; sequence DQSSPLSAAETLKSQDS. Residues 339–351 show a composition bias toward low complexity; it reads SHASAHGPPSGSP.

This sequence belongs to the TALE/IRO homeobox family. In terms of tissue distribution, expressed in specific and overlapping patterns with Irx1 and Irx2 in the developing and adult metanephric kidney. In the adult metanephros, renal expression is found in the loop of Henle in the S3 proximal tubule segment and in the thick ascending limb (TAL) of the distal tubule.

The protein resides in the nucleus. In Mus musculus (Mouse), this protein is Iroquois-class homeodomain protein IRX-1 (Irx1).